The following is a 212-amino-acid chain: Cell division protein SepF (212 aa).

The segment at 32-104 (RYADPDTSYD…APLGSDAHRE (73 aa)) is disordered. Over residues 64–73 (EAEEDGGDYG) the composition is skewed to acidic residues.

It belongs to the SepF family. Homodimer. Interacts with FtsZ.

It localises to the cytoplasm. Its function is as follows. Cell division protein that is part of the divisome complex and is recruited early to the Z-ring. Probably stimulates Z-ring formation, perhaps through the cross-linking of FtsZ protofilaments. Its function overlaps with FtsA. This chain is Cell division protein SepF, found in Saccharopolyspora erythraea (strain ATCC 11635 / DSM 40517 / JCM 4748 / NBRC 13426 / NCIMB 8594 / NRRL 2338).